Consider the following 1695-residue polypeptide: Helicase swr1 (1695 aa).

The segment covering 1–10 has biased composition (polar residues); that stretch reads MQDGSLNGLS. Residues 1 to 229 are disordered; the sequence is MQDGSLNGLS…SHSNVTSTPT (229 aa). A compositionally biased stretch (basic and acidic residues) spans 11–25; that stretch reads HHNDERVNHENEDKS. Polar residues-rich tracts occupy residues 126–137 and 145–156; these read AQRSTVNKNLSG and SPLSMSVSQSGI. The span at 187–207 shows a compositional bias: low complexity; sequence RSPPRQTPSRTRSQSSATSAP. Positions 334–408 constitute an HSA domain; the sequence is PEQQEEPPQQ…EEVRVKRKQL (75 aa). Disordered stretches follow at residues 467 to 738 and 772 to 821; these read SDFL…ASAP and LRQN…LKTP. Residues 499–514 show a composition bias toward acidic residues; the sequence is SETEDEDEVDDDEGLT. Residues 538–554 show a composition bias toward polar residues; the sequence is ASDTSESSDGTRTSHIL. The span at 572–616 shows a compositional bias: acidic residues; that stretch reads IELDEVDPMLLDDSEDESTDMDDDMGDSDEDGDADGTDSDDESDD. The span at 626–638 shows a compositional bias: basic and acidic residues; sequence SKDRVLNDAHRFD. The span at 656 to 678 shows a compositional bias: acidic residues; that stretch reads FDDDGQSVSVDEDGDEELEDADE. Residues 685–697 show a composition bias toward polar residues; that stretch reads GPSNSVSISQSTA. Residues 705–718 show a composition bias toward acidic residues; that stretch reads TPDEEPDEQAEVVD. The region spanning 842–1007 is the Helicase ATP-binding domain; that stretch reads AGLYNNHING…WSLLFFLMPS (166 aa). ATP is bound at residue 855–862; that stretch reads DEMGLGKT. A DEAH box motif is present at residues 958–961; the sequence is DEAH. Residues 1382 to 1532 enclose the Helicase C-terminal domain; the sequence is RLDKLLRDLK…DVVIQEGEFT (151 aa). Disordered stretches follow at residues 1590–1625 and 1669–1695; these read AQKEMEQADNDDFGDRSISHTPGQVGTPLATGPQEG and EPLVLPPDKTKKKSKKGKEHRLSKRRR. Over residues 1678–1695 the composition is skewed to basic residues; that stretch reads TKKKSKKGKEHRLSKRRR.

This sequence belongs to the SNF2/RAD54 helicase family. SWR1 subfamily. In terms of assembly, component of the SWR1 chromatin-remodeling complex.

It is found in the nucleus. It catalyses the reaction ATP + H2O = ADP + phosphate + H(+). In terms of biological role, catalytic component of the SWR1 complex which mediates the ATP-dependent exchange of histone H2A for the H2A variant HZT1 leading to transcriptional regulation of selected genes by chromatin remodeling. The chain is Helicase swr1 (swr1) from Aspergillus fumigatus (strain ATCC MYA-4609 / CBS 101355 / FGSC A1100 / Af293) (Neosartorya fumigata).